The chain runs to 292 residues: 33 kDa chaperonin (292 aa).

2 cysteine pairs are disulfide-bonded: Cys230/Cys232 and Cys263/Cys266.

It belongs to the HSP33 family. In terms of processing, under oxidizing conditions two disulfide bonds are formed involving the reactive cysteines. Under reducing conditions zinc is bound to the reactive cysteines and the protein is inactive.

It localises to the cytoplasm. Redox regulated molecular chaperone. Protects both thermally unfolding and oxidatively damaged proteins from irreversible aggregation. Plays an important role in the bacterial defense system toward oxidative stress. This chain is 33 kDa chaperonin, found in Salmonella paratyphi A (strain ATCC 9150 / SARB42).